Here is a 314-residue protein sequence, read N- to C-terminus: O-antigen chain rhamnosyltransferase RfbN (314 aa).

Belongs to the glycosyltransferase 2 family.

It catalyses the reaction alpha-D-galactosyl-di-trans,octa-cis-undecaprenyl diphosphate + dTDP-beta-L-rhamnose = alpha-L-rhamnosyl-(1-&gt;3)-alpha-D-galactosyl-1-diphospho-di-trans,octa-cis-undecaprenol + dTDP + H(+). It functions in the pathway bacterial outer membrane biogenesis; LPS O-antigen biosynthesis. Its function is as follows. Rhamnosyltransferase involved in the biosynthesis of the repeat unit of the lipopolysaccharide (LPS) O-antigen region. Catalyzes the addition of a rhamnose to the galactosyl-undecaprenyl diphosphate intermediate. The polypeptide is O-antigen chain rhamnosyltransferase RfbN (Salmonella typhimurium (strain LT2 / SGSC1412 / ATCC 700720)).